The primary structure comprises 785 residues: MNVYVQRDDVGLGQIHRFRIFVQSGGNLHSATSSTTVPPTVNLNSVTKKESGSIEDRAGSGGMTISSGENISKQISENNSSTNPKHANSESSPLLSSDFSSSSKDYHKVGAFTDNTNAINIPEQTRGVSHTSSSPSVGTSFSSINLREVKNPLAGSDSTAPFINSTNSVLWIRVRNREARFRQAAYLQGPFTLCVSVWNDQFFDEKNSLLNFDPQVQPSTSFWVCVPYSCFSNQQPIYIEIASQAIFKDRSINFELAISQSQHSIRAMSAADIDTLHAFPALHVEHQTPENLWRLPYSSFHSKNSHLVVLTHGMHSNVGADMEYLKEKLIESSKSVKELVVVRGFTGNYCQTEKGVRWLGKRLGEWLLDITGWGSASFPRYSHISVVAHSLGGLVQTYAVGYVHAKTHGAFFQAIHPVFFVTLATPWLGVAGEHPSYIGKALSYGIIGKTGQDLSLTPLNHSIESRPFLVLMSDPSTPFFQAVSFFEKRILFANTTNDYIVPFGTSAMEVSSLGKVEEAEGSDKVMPTHMENGISPTLKENEQTVQSVGDNAKKIHASSEESGSSFSKALKSFVGLFSYSASKTTDTEIPLVKNEDENARKPTEPNCLGSDELDVSNSSNQFFCSAPKLDPTSTFSGVAQRVVNTFTNLFIPAVPTDSYFFKYHLHKVVVSDNVHDPAASFSTFDGITELNNMNNGFLSNEITIAKNWHRLAWRKVAVRLDGDAHNTMIVRRRFPNAYGWTVIKHLTEILFEQNTSTAYMNPISFDETTTAAWLSEIYEDNSISV.

Disordered stretches follow at residues 29 to 99 (HSAT…SSDF) and 115 to 140 (NTNA…VGTS). Positions 32–41 (TSSTTVPPTV) are enriched in low complexity. Basic and acidic residues predominate over residues 47–58 (TKKESGSIEDRA). Residues 63-86 (MTISSGENISKQISENNSSTNPKH) are compositionally biased toward polar residues. Composition is skewed to low complexity over residues 89–99 (SESSPLLSSDF) and 127–140 (GVSH…VGTS). Residue S390 is the Charge relay system of the active site.

This sequence belongs to the putative lipase ROG1 family.

This chain is Putative lipase C4A8.10, found in Schizosaccharomyces pombe (strain 972 / ATCC 24843) (Fission yeast).